The chain runs to 446 residues: N-succinylarginine dihydrolase (446 aa).

Substrate-binding positions include 19–28 (AGLSFGNVAS), N110, and 137–138 (HR). The active site involves E174. R213 lines the substrate pocket. H249 is a catalytic residue. Substrate-binding residues include D251 and N364. Catalysis depends on C370, which acts as the Nucleophile.

It belongs to the succinylarginine dihydrolase family. As to quaternary structure, homodimer.

The catalysed reaction is N(2)-succinyl-L-arginine + 2 H2O + 2 H(+) = N(2)-succinyl-L-ornithine + 2 NH4(+) + CO2. Its pathway is amino-acid degradation; L-arginine degradation via AST pathway; L-glutamate and succinate from L-arginine: step 2/5. Functionally, catalyzes the hydrolysis of N(2)-succinylarginine into N(2)-succinylornithine, ammonia and CO(2). This chain is N-succinylarginine dihydrolase, found in Burkholderia multivorans (strain ATCC 17616 / 249).